The primary structure comprises 141 residues: Large ribosomal subunit protein uL11 (141 aa).

This sequence belongs to the universal ribosomal protein uL11 family. Part of the ribosomal stalk of the 50S ribosomal subunit. Interacts with L10 and the large rRNA to form the base of the stalk. L10 forms an elongated spine to which L12 dimers bind in a sequential fashion forming a multimeric L10(L12)X complex. One or more lysine residues are methylated.

Functionally, forms part of the ribosomal stalk which helps the ribosome interact with GTP-bound translation factors. This chain is Large ribosomal subunit protein uL11, found in Nostoc sp. (strain PCC 7120 / SAG 25.82 / UTEX 2576).